We begin with the raw amino-acid sequence, 122 residues long: Large ribosomal subunit protein uL14 (122 aa).

It belongs to the universal ribosomal protein uL14 family. In terms of assembly, part of the 50S ribosomal subunit. Forms a cluster with proteins L3 and L19. In the 70S ribosome, L14 and L19 interact and together make contacts with the 16S rRNA in bridges B5 and B8.

In terms of biological role, binds to 23S rRNA. Forms part of two intersubunit bridges in the 70S ribosome. The sequence is that of Large ribosomal subunit protein uL14 from Agathobacter rectalis (strain ATCC 33656 / DSM 3377 / JCM 17463 / KCTC 5835 / VPI 0990) (Eubacterium rectale).